The sequence spans 203 residues: N-(5'-phosphoribosyl)anthranilate isomerase (203 aa).

Belongs to the TrpF family.

The catalysed reaction is N-(5-phospho-beta-D-ribosyl)anthranilate = 1-(2-carboxyphenylamino)-1-deoxy-D-ribulose 5-phosphate. It participates in amino-acid biosynthesis; L-tryptophan biosynthesis; L-tryptophan from chorismate: step 3/5. This chain is N-(5'-phosphoribosyl)anthranilate isomerase, found in Thermoanaerobacter pseudethanolicus (strain ATCC 33223 / 39E) (Clostridium thermohydrosulfuricum).